Here is a 152-residue protein sequence, read N- to C-terminus: Syntaxin-8A (152 aa).

Residues 1–14 (MNNNNNFNSNFNSN) show a composition bias toward low complexity. The tract at residues 1 to 22 (MNNNNNFNSNFNSNRISSTQPY) is disordered. The Cytoplasmic portion of the chain corresponds to 1-131 (MNNNNNFNSN…LTQQSKTTGY (131 aa)). One can recognise a t-SNARE coiled-coil homology domain in the interval 60-122 (KRDMEEQDKM…RNTTKNLITL (63 aa)). A helical; Anchor for type IV membrane protein transmembrane segment spans residues 132–152 (CSAICFLLLVLLVIIILASVL).

The protein belongs to the syntaxin family. Component of the SNARE complex composed of syn7A, syn8A, vamp7A and vti1A.

The protein resides in the endosome membrane. Functionally, involved in the targeting and/or fusion of transport vesicles to their target membrane during transport of proteins from the early endosome to the lysosome. Required for fusion of late endosomes with lysosomes and homotypic lysosomal fusion. The protein is Syntaxin-8A of Dictyostelium discoideum (Social amoeba).